Here is a 71-residue protein sequence, read N- to C-terminus: Protein SlyX homolog (71 aa).

Belongs to the SlyX family.

The protein is Protein SlyX homolog of Rhodospirillum rubrum (strain ATCC 11170 / ATH 1.1.1 / DSM 467 / LMG 4362 / NCIMB 8255 / S1).